Consider the following 86-residue polypeptide: Candiduxin-2 (86 aa).

An N-terminal signal peptide occupies residues 1-21 (MKTLLLTLVVLTIACLDLGYT). 4 disulfides stabilise this stretch: Cys-24–Cys-45, Cys-38–Cys-62, Cys-66–Cys-78, and Cys-79–Cys-84.

It belongs to the three-finger toxin family. Short-chain subfamily. Orphan group IX sub-subfamily. As to expression, expressed by the venom gland.

The protein resides in the secreted. The sequence is that of Candiduxin-2 from Bungarus candidus (Malayan krait).